The sequence spans 408 residues: Energy-coupling factor transporter ATP-binding protein EcfA1 (408 aa).

Residues 140–374 (IEINHLSFKY…KDFLRNIQLD (235 aa)) form the ABC transporter domain. Residue 174 to 181 (GHNGSGKS) participates in ATP binding.

It belongs to the ABC transporter superfamily. Energy-coupling factor EcfA family. In terms of assembly, forms a stable energy-coupling factor (ECF) transporter complex composed of 2 membrane-embedded substrate-binding proteins (S component), 2 ATP-binding proteins (A component) and 2 transmembrane proteins (T component).

The protein localises to the cell membrane. ATP-binding (A) component of a common energy-coupling factor (ECF) ABC-transporter complex. Unlike classic ABC transporters this ECF transporter provides the energy necessary to transport a number of different substrates. This Mycoplasma mycoides subsp. mycoides SC (strain CCUG 32753 / NCTC 10114 / PG1) protein is Energy-coupling factor transporter ATP-binding protein EcfA1.